An 81-amino-acid polypeptide reads, in one-letter code: Relaxin-like protein AGF (81 aa).

Intrachain disulfides connect cysteine 14/cysteine 66, cysteine 26/cysteine 79, and cysteine 65/cysteine 70. The N-linked (GlcNAc...) asparagine glycan is linked to asparagine 37.

It belongs to the insulin family. Heterodimer of a B chain and an A chain linked by two disulfide bonds.

The protein resides in the secreted. In terms of biological role, uncertain. The chain is Relaxin-like protein AGF from Hypanus sabinus (Atlantic stingray).